The primary structure comprises 228 residues: ATP synthase subunit a (228 aa).

Helical transmembrane passes span 19–39 (AIYI…AVAV), 81–101 (LIAT…IPGF), 107–127 (SLNL…FEGI), 136–156 (FAGF…IEVI), 178–198 (LFLL…PYAL), and 204–224 (ILQA…AVVV).

Belongs to the ATPase A chain family. In terms of assembly, F-type ATPases have 2 components, CF(1) - the catalytic core - and CF(0) - the membrane proton channel. CF(1) has five subunits: alpha(3), beta(3), gamma(1), delta(1), epsilon(1). CF(0) has three main subunits: a(1), b(2) and c(9-12). The alpha and beta chains form an alternating ring which encloses part of the gamma chain. CF(1) is attached to CF(0) by a central stalk formed by the gamma and epsilon chains, while a peripheral stalk is formed by the delta and b chains.

It localises to the cell inner membrane. Key component of the proton channel; it plays a direct role in the translocation of protons across the membrane. The protein is ATP synthase subunit a of Campylobacter hominis (strain ATCC BAA-381 / DSM 21671 / CCUG 45161 / LMG 19568 / NCTC 13146 / CH001A).